Reading from the N-terminus, the 513-residue chain is ATP synthase subunit alpha (513 aa).

169–176 (GDRQTGKT) contacts ATP.

It belongs to the ATPase alpha/beta chains family. F-type ATPases have 2 components, CF(1) - the catalytic core - and CF(0) - the membrane proton channel. CF(1) has five subunits: alpha(3), beta(3), gamma(1), delta(1), epsilon(1). CF(0) has three main subunits: a(1), b(2) and c(9-12). The alpha and beta chains form an alternating ring which encloses part of the gamma chain. CF(1) is attached to CF(0) by a central stalk formed by the gamma and epsilon chains, while a peripheral stalk is formed by the delta and b chains.

It localises to the cell inner membrane. It catalyses the reaction ATP + H2O + 4 H(+)(in) = ADP + phosphate + 5 H(+)(out). Produces ATP from ADP in the presence of a proton gradient across the membrane. The alpha chain is a regulatory subunit. The chain is ATP synthase subunit alpha from Histophilus somni (strain 2336) (Haemophilus somnus).